A 31-amino-acid chain; its full sequence is MDSVAYIIVLAMALSVLFFAIAFREPPRIEK.

Residues 3–23 (SVAYIIVLAMALSVLFFAIAF) form a helical membrane-spanning segment.

Belongs to the PsbT family. PSII is composed of 1 copy each of membrane proteins PsbA, PsbB, PsbC, PsbD, PsbE, PsbF, PsbH, PsbI, PsbJ, PsbK, PsbL, PsbM, PsbT, PsbX, PsbY, PsbZ, Psb30/Ycf12, peripheral proteins PsbO, CyanoQ (PsbQ), PsbU, PsbV and a large number of cofactors. It forms dimeric complexes.

The protein resides in the cellular thylakoid membrane. Functionally, found at the monomer-monomer interface of the photosystem II (PS II) dimer, plays a role in assembly and dimerization of PSII. PSII is a light-driven water plastoquinone oxidoreductase, using light energy to abstract electrons from H(2)O, generating a proton gradient subsequently used for ATP formation. The sequence is that of Photosystem II reaction center protein T from Picosynechococcus sp. (strain ATCC 27264 / PCC 7002 / PR-6) (Agmenellum quadruplicatum).